A 186-amino-acid polypeptide reads, in one-letter code: Ribosome-recycling factor (186 aa).

This sequence belongs to the RRF family.

The protein localises to the cytoplasm. Responsible for the release of ribosomes from messenger RNA at the termination of protein biosynthesis. May increase the efficiency of translation by recycling ribosomes from one round of translation to another. The sequence is that of Ribosome-recycling factor from Burkholderia ambifaria (strain ATCC BAA-244 / DSM 16087 / CCUG 44356 / LMG 19182 / AMMD) (Burkholderia cepacia (strain AMMD)).